The chain runs to 149 residues: 3-hydroxyacyl-[acyl-carrier-protein] dehydratase FabZ (149 aa).

Residue His-52 is part of the active site.

This sequence belongs to the thioester dehydratase family. FabZ subfamily.

It localises to the cytoplasm. The enzyme catalyses a (3R)-hydroxyacyl-[ACP] = a (2E)-enoyl-[ACP] + H2O. Its function is as follows. Involved in unsaturated fatty acids biosynthesis. Catalyzes the dehydration of short chain beta-hydroxyacyl-ACPs and long chain saturated and unsaturated beta-hydroxyacyl-ACPs. The sequence is that of 3-hydroxyacyl-[acyl-carrier-protein] dehydratase FabZ from Cupriavidus necator (strain ATCC 17699 / DSM 428 / KCTC 22496 / NCIMB 10442 / H16 / Stanier 337) (Ralstonia eutropha).